The chain runs to 370 residues: MRPDCTDFRQLFLDDVPMMDMRAPVEFAKGAFPGVVNLPLMNDQERQKVGTCYKQQGQAAAIALGHQLVSGTTKQARLEAWAAFAKAHPDGYLYCFRGGLRSQIVQGWLRDEAGIQYPRVKGGYKAMRTFLLETTQQAVEQCDFVLVGGLTGTGKTDVLHQLDNVLDLEGHANHRGSSFGKRATAQPAQIDFENQLAIDVLKKRARGIGQFVLEDEGRIVGSCTVPLELYQGMQHYPLVWLEDSFTNRVERILRDYVVNLSAEFKAVHGEEDGPRLFAERMLQSMANIYKRLGGERHQRLSEMLREALQEQQRSGAVDLHRGWIEGLLNEYYDPMYAYQRAAKAERIEFAGDAVEVREYLKARALREPRK.

The Rhodanese domain occupies 12-136; the sequence is FLDDVPMMDM…MRTFLLETTQ (125 aa). Cys95 (S-selanylcysteine intermediate) is an active-site residue.

It belongs to the SelU family. In terms of assembly, monomer.

The enzyme catalyses 5-methylaminomethyl-2-thiouridine(34) in tRNA + selenophosphate + (2E)-geranyl diphosphate + H2O + H(+) = 5-methylaminomethyl-2-selenouridine(34) in tRNA + (2E)-thiogeraniol + phosphate + diphosphate. It catalyses the reaction 5-methylaminomethyl-2-thiouridine(34) in tRNA + (2E)-geranyl diphosphate = 5-methylaminomethyl-S-(2E)-geranyl-thiouridine(34) in tRNA + diphosphate. It carries out the reaction 5-methylaminomethyl-S-(2E)-geranyl-thiouridine(34) in tRNA + selenophosphate + H(+) = 5-methylaminomethyl-2-(Se-phospho)selenouridine(34) in tRNA + (2E)-thiogeraniol. The catalysed reaction is 5-methylaminomethyl-2-(Se-phospho)selenouridine(34) in tRNA + H2O = 5-methylaminomethyl-2-selenouridine(34) in tRNA + phosphate. Its function is as follows. Involved in the post-transcriptional modification of the uridine at the wobble position (U34) of tRNA(Lys), tRNA(Glu) and tRNA(Gln). Catalyzes the conversion of 2-thiouridine (S2U-RNA) to 2-selenouridine (Se2U-RNA). Acts in a two-step process involving geranylation of 2-thiouridine (S2U) to S-geranyl-2-thiouridine (geS2U) and subsequent selenation of the latter derivative to 2-selenouridine (Se2U) in the tRNA chain. The chain is tRNA 2-selenouridine synthase from Pseudomonas putida (strain ATCC 700007 / DSM 6899 / JCM 31910 / BCRC 17059 / LMG 24140 / F1).